Reading from the N-terminus, the 446-residue chain is tRNA-2-methylthio-N(6)-dimethylallyladenosine synthase (446 aa).

Residues 3–120 form the MTTase N-terminal domain; sequence KKLFIETHGC…LPEMIDAARS (118 aa). Cys12, Cys49, Cys83, Cys157, Cys161, and Cys164 together coordinate [4Fe-4S] cluster. Residues 143-375 form the Radical SAM core domain; that stretch reads RVDGPTAFVS…QSRIHQQGYE (233 aa). Residues 378–442 form the TRAM domain; it reads RRMVGSTQRI…PHSLRGTLID (65 aa).

This sequence belongs to the methylthiotransferase family. MiaB subfamily. As to quaternary structure, monomer. [4Fe-4S] cluster is required as a cofactor.

The protein localises to the cytoplasm. It catalyses the reaction N(6)-dimethylallyladenosine(37) in tRNA + (sulfur carrier)-SH + AH2 + 2 S-adenosyl-L-methionine = 2-methylsulfanyl-N(6)-dimethylallyladenosine(37) in tRNA + (sulfur carrier)-H + 5'-deoxyadenosine + L-methionine + A + S-adenosyl-L-homocysteine + 2 H(+). Its function is as follows. Catalyzes the methylthiolation of N6-(dimethylallyl)adenosine (i(6)A), leading to the formation of 2-methylthio-N6-(dimethylallyl)adenosine (ms(2)i(6)A) at position 37 in tRNAs that read codons beginning with uridine. The chain is tRNA-2-methylthio-N(6)-dimethylallyladenosine synthase from Pseudomonas aeruginosa (strain UCBPP-PA14).